A 242-amino-acid chain; its full sequence is Uridylate kinase (242 aa).

An ATP-binding site is contributed by lysine 8 to glycine 11. Glycine 50 is a UMP binding site. 2 residues coordinate ATP: glycine 51 and arginine 55. Residues aspartate 71 and threonine 132–threonine 139 contribute to the UMP site. ATP is bound by residues threonine 159, tyrosine 165, and aspartate 168.

This sequence belongs to the UMP kinase family. As to quaternary structure, homohexamer.

The protein resides in the cytoplasm. It carries out the reaction UMP + ATP = UDP + ADP. The protein operates within pyrimidine metabolism; CTP biosynthesis via de novo pathway; UDP from UMP (UMPK route): step 1/1. Inhibited by UTP. Functionally, catalyzes the reversible phosphorylation of UMP to UDP. In Nitratiruptor sp. (strain SB155-2), this protein is Uridylate kinase.